Reading from the N-terminus, the 366-residue chain is Beta sliding clamp (366 aa).

It belongs to the beta sliding clamp family. As to quaternary structure, forms a ring-shaped head-to-tail homodimer around DNA which binds and tethers DNA polymerases and other proteins to the DNA. The DNA replisome complex has a single clamp-loading complex (3 tau and 1 each of delta, delta', psi and chi subunits) which binds 3 Pol III cores (1 core on the leading strand and 2 on the lagging strand) each with a beta sliding clamp dimer. Additional proteins in the replisome are other copies of gamma, psi and chi, Ssb, DNA helicase and RNA primase.

It is found in the cytoplasm. Confers DNA tethering and processivity to DNA polymerases and other proteins. Acts as a clamp, forming a ring around DNA (a reaction catalyzed by the clamp-loading complex) which diffuses in an ATP-independent manner freely and bidirectionally along dsDNA. Initially characterized for its ability to contact the catalytic subunit of DNA polymerase III (Pol III), a complex, multichain enzyme responsible for most of the replicative synthesis in bacteria; Pol III exhibits 3'-5' exonuclease proofreading activity. The beta chain is required for initiation of replication as well as for processivity of DNA replication. The chain is Beta sliding clamp (dnaN) from Salmonella typhimurium (strain LT2 / SGSC1412 / ATCC 700720).